Reading from the N-terminus, the 675-residue chain is DNA ligase (675 aa).

NAD(+) contacts are provided by residues 35–39 (DAVYD), 84–85 (SL), and Glu-118. Lys-120 (N6-AMP-lysine intermediate) is an active-site residue. Arg-141, Glu-178, Lys-295, and Lys-319 together coordinate NAD(+). Cys-413, Cys-416, Cys-431, and Cys-436 together coordinate Zn(2+). The BRCT domain maps to 598-675 (GAIGALTGQT…DEAELKALLS (78 aa)).

This sequence belongs to the NAD-dependent DNA ligase family. LigA subfamily. Requires Mg(2+) as cofactor. It depends on Mn(2+) as a cofactor.

It catalyses the reaction NAD(+) + (deoxyribonucleotide)n-3'-hydroxyl + 5'-phospho-(deoxyribonucleotide)m = (deoxyribonucleotide)n+m + AMP + beta-nicotinamide D-nucleotide.. Functionally, DNA ligase that catalyzes the formation of phosphodiester linkages between 5'-phosphoryl and 3'-hydroxyl groups in double-stranded DNA using NAD as a coenzyme and as the energy source for the reaction. It is essential for DNA replication and repair of damaged DNA. This Synechococcus sp. (strain RCC307) protein is DNA ligase.